Consider the following 901-residue polypeptide: Core protein VP3 (901 aa).

It belongs to the orbivirus VP3 family.

The protein resides in the virion. The VP3 protein is one of the five proteins (with VP1, VP4, VP6 and VP7) which form the inner capsid of the virus. The protein is Core protein VP3 (Segment-3) of Bluetongue virus 1 (isolate South Africa) (BTV 1).